Here is a 359-residue protein sequence, read N- to C-terminus: NADPH HC-toxin reductase 2 (359 aa).

NADP(+) is bound by residues Arg-39, Asp-67–Leu-68, Val-87–Thr-89, Tyr-177, Lys-181, Leu-206–Val-209, and Thr-221. Lys-181 functions as the Proton donor in the catalytic mechanism.

This sequence belongs to the NAD(P)-dependent epimerase/dehydratase family.

In terms of biological role, in tandem with Hm1, NADPH-dependent HC toxin reductase (HCTR), which inactivates HC toxin, a cyclic tetrapeptide produced by the fungus Cochliobolus carbonum to permit infection and acting as an inhibitor of host histone deacetylases (HDACs), thus conferring resistance against C.carbonum race 1 in resistant cultivars (e.g. cv. B73 and cv. Wisconsin 22). Catalyzes the production of 8-hydroxy derivative of HC-toxin via the reduction of the 8-keto group of 2-amino-9,10-epoxy-8-oxo-decanoic acid, an amino acid of the HC-toxin. The chain is NADPH HC-toxin reductase 2 from Zea mays (Maize).